Consider the following 263-residue polypeptide: tRNA pseudouridine synthase A (263 aa).

Aspartate 51 (nucleophile) is an active-site residue. Tyrosine 106 lines the substrate pocket.

Belongs to the tRNA pseudouridine synthase TruA family.

The catalysed reaction is uridine(38/39/40) in tRNA = pseudouridine(38/39/40) in tRNA. Formation of pseudouridine at positions 38, 39 and 40 in the anticodon stem and loop of transfer RNAs. The polypeptide is tRNA pseudouridine synthase A (Pyrococcus abyssi (strain GE5 / Orsay)).